Here is a 93-residue protein sequence, read N- to C-terminus: Small ribosomal subunit protein bS20 (93 aa).

A disordered region spans residues 72–93 (KNTASRKKSRLTRKFNSVYKAS). Basic residues predominate over residues 74 to 84 (TASRKKSRLTR).

This sequence belongs to the bacterial ribosomal protein bS20 family.

Binds directly to 16S ribosomal RNA. The polypeptide is Small ribosomal subunit protein bS20 (Carboxydothermus hydrogenoformans (strain ATCC BAA-161 / DSM 6008 / Z-2901)).